A 419-amino-acid chain; its full sequence is Cell division protein FtsZ (419 aa).

Residues 22 to 26 (GGGGN), 109 to 111 (GSG), Glu140, Arg144, and Asp188 contribute to the GTP site. A disordered region spans residues 397–419 (ERFEAPISQDEDELDTPPFFKNR).

This sequence belongs to the FtsZ family. As to quaternary structure, homodimer. Polymerizes to form a dynamic ring structure in a strictly GTP-dependent manner. Interacts directly with several other division proteins. Interacts with CcrZ; the interaction is direct.

It is found in the cytoplasm. Functionally, essential cell division protein that forms a contractile ring structure (Z ring) at the future cell division site. The regulation of the ring assembly controls the timing and the location of cell division. One of the functions of the FtsZ ring is to recruit other cell division proteins to the septum to produce a new cell wall between the dividing cells. Binds GTP and shows GTPase activity. The protein is Cell division protein FtsZ of Streptococcus pneumoniae serotype 2 (strain D39 / NCTC 7466).